The following is a 39-amino-acid chain: Natriuretic peptide CnNP-a (39 aa).

Positions 1–8 are excised as a propeptide; it reads SGSKTAKI. C12 and C28 are joined by a disulfide.

The protein belongs to the natriuretic peptide family. As to expression, expressed by the venom gland.

It localises to the secreted. In terms of biological role, snake venom natriuretic peptide that targets both NPR1 and NPR2. Exhibits hypotensive and vasodepressor activities. The chain is Natriuretic peptide CnNP-a from Cryptophis nigrescens (Eastern small-eyed snake).